Reading from the N-terminus, the 478-residue chain is Cytochrome c-552 (478 aa).

The first 26 residues, 1–26, serve as a signal peptide directing secretion; it reads MARKTLRARRFFSLIFPFFFITSVYA. His94 contributes to the heme c binding site. The heme site is built by Cys122, Cys125, and Lys126. Heme c contacts are provided by Cys160, Cys163, His164, Cys209, Cys212, and His213. Ca(2+)-binding residues include Glu215, Tyr216, Lys261, and Gln263. Tyr216 is a binding site for substrate. His264 lines the substrate pocket. Heme c-binding residues include His275, Cys282, Cys285, His286, His301, Cys314, Cys317, His318, and His393.

The protein belongs to the cytochrome c-552 family. Requires Ca(2+) as cofactor. It depends on heme c as a cofactor.

The protein resides in the periplasm. It carries out the reaction 6 Fe(III)-[cytochrome c] + NH4(+) + 2 H2O = 6 Fe(II)-[cytochrome c] + nitrite + 8 H(+). It participates in nitrogen metabolism; nitrate reduction (assimilation). In terms of biological role, catalyzes the reduction of nitrite to ammonia, consuming six electrons in the process. The polypeptide is Cytochrome c-552 (Salmonella schwarzengrund (strain CVM19633)).